Here is a 305-residue protein sequence, read N- to C-terminus: Oxygen-dependent coproporphyrinogen-III oxidase (305 aa).

A substrate-binding site is contributed by S93. 2 residues coordinate a divalent metal cation: H97 and H107. Catalysis depends on H107, which acts as the Proton donor. Residue 109–111 (NVR) participates in substrate binding. The a divalent metal cation site is built by H146 and H176. The interval 241-276 (YVEFNLVFDRGTLFGLQSGGRTESILMSLPPQVRWG) is important for dimerization. Residue 259-261 (GGR) coordinates substrate.

Belongs to the aerobic coproporphyrinogen-III oxidase family. Homodimer. It depends on a divalent metal cation as a cofactor.

The protein resides in the cytoplasm. It carries out the reaction coproporphyrinogen III + O2 + 2 H(+) = protoporphyrinogen IX + 2 CO2 + 2 H2O. It participates in porphyrin-containing compound metabolism; protoporphyrin-IX biosynthesis; protoporphyrinogen-IX from coproporphyrinogen-III (O2 route): step 1/1. Functionally, involved in the heme biosynthesis. Catalyzes the aerobic oxidative decarboxylation of propionate groups of rings A and B of coproporphyrinogen-III to yield the vinyl groups in protoporphyrinogen-IX. The protein is Oxygen-dependent coproporphyrinogen-III oxidase of Pseudomonas aeruginosa (strain UCBPP-PA14).